A 316-amino-acid polypeptide reads, in one-letter code: Alpha- and gamma-adaptin-binding protein p34 (316 aa).

Residues 198-232 (ASAESCHSEQQEPSPTAERTESLPGHHSGACGSAG) form a disordered region. The segment covering 222 to 232 (GHHSGACGSAG) has biased composition (low complexity). 2 positions are modified to phosphoserine: serine 311 and serine 312.

As to quaternary structure, associated with AP-1 and AP-2 complexes.

The protein resides in the cytoplasm. It localises to the cytosol. Its function is as follows. May be involved in endocytic recycling of growth factor receptors such as EGFR. The polypeptide is Alpha- and gamma-adaptin-binding protein p34 (Aagab) (Mus musculus (Mouse)).